The sequence spans 479 residues: Ribulose bisphosphate carboxylase large chain (479 aa).

A propeptide spanning residues 1-2 is cleaved from the precursor; that stretch reads MS. Proline 3 is modified (N-acetylproline). At lysine 14 the chain carries N6,N6,N6-trimethyllysine. 2 residues coordinate substrate: asparagine 123 and threonine 173. Lysine 175 (proton acceptor) is an active-site residue. Lysine 177 contacts substrate. Mg(2+) contacts are provided by lysine 201, aspartate 203, and glutamate 204. At lysine 201 the chain carries N6-carboxylysine. The Proton acceptor role is filled by histidine 294. Arginine 295, histidine 327, and serine 379 together coordinate substrate.

Belongs to the RuBisCO large chain family. Type I subfamily. Heterohexadecamer of 8 large chains and 8 small chains. Requires Mg(2+) as cofactor.

Its subcellular location is the plastid. The protein resides in the chloroplast. The enzyme catalyses 2 (2R)-3-phosphoglycerate + 2 H(+) = D-ribulose 1,5-bisphosphate + CO2 + H2O. It carries out the reaction D-ribulose 1,5-bisphosphate + O2 = 2-phosphoglycolate + (2R)-3-phosphoglycerate + 2 H(+). RuBisCO catalyzes two reactions: the carboxylation of D-ribulose 1,5-bisphosphate, the primary event in carbon dioxide fixation, as well as the oxidative fragmentation of the pentose substrate in the photorespiration process. Both reactions occur simultaneously and in competition at the same active site. This is Ribulose bisphosphate carboxylase large chain from Jasminum nudiflorum (Winter jasmine).